The following is a 697-amino-acid chain: SPX domain-containing membrane protein At1g63010 (697 aa).

The SPX domain occupies 2 to 145; that stretch reads VAFGKYLQRK…GYRFADYYVK (144 aa). Transmembrane regions (helical) follow at residues 247–267, 278–298, 315–335, 337–356, 375–395, and 411–431; these read FNSL…TYII, LGAA…AQVF, LVFS…AYDA, SIAL…ARAV, AGFV…AGLL, and LPGW…CISF. A disordered region spans residues 439–459; the sequence is EDGEKNNRNETTSDRVESSRV. Transmembrane regions (helical) follow at residues 513 to 533, 544 to 564, 576 to 596, 604 to 624, and 670 to 690; these read LLIY…SSVI, SVAI…ILVG, ILLT…NLFV, VISG…NLSL, and LLNA…VATC.

The protein belongs to the major facilitator superfamily.

It is found in the membrane. The protein is SPX domain-containing membrane protein At1g63010 of Arabidopsis thaliana (Mouse-ear cress).